Consider the following 142-residue polypeptide: Two-component response regulator ARR22 (142 aa).

In terms of domain architecture, Response regulatory spans 23-140 (NVLIVDDDPL…KIFPLISHLF (118 aa)). 4-aspartylphosphate is present on Asp74.

Belongs to the ARR family. Type-A subfamily. Two-component system major event consists of a His-to-Asp phosphorelay between a sensor histidine kinase (HK) and a response regulator (RR). In plants, the His-to-Asp phosphorelay involves an additional intermediate named Histidine-containing phosphotransfer protein (HPt). This multistep phosphorelay consists of a His-Asp-His-Asp sequential transfer of a phosphate group between first a His and an Asp of the HK protein, followed by the transfer to a conserved His of the HPt protein and finally the transfer to an Asp in the receiver domain of the RR protein.

It localises to the nucleus. Functionally, functions as a response regulator involved in His-to-Asp phosphorelay signal transduction system. Phosphorylation of the Asp residue in the receiver domain activates the ability of the protein to promote the transcription of target genes. Type-A response regulators seem to act as negative regulators of the cytokinin signaling. In Arabidopsis thaliana (Mouse-ear cress), this protein is Two-component response regulator ARR22 (ARR22).